Here is a 574-residue protein sequence, read N- to C-terminus: Bifunctional NADP phosphatase/NAD kinase (574 aa).

The interval 1-297 (MVIMEGFKIA…KLIALFGNRW (297 aa)) is NADP phosphatase. E69, D87, I89, D90, and D243 together coordinate Mg(2+). Positions 302-574 (VKFGIVVRED…NKLSRCLGIK (273 aa)) are NAD kinase. D362 (proton acceptor) is an active-site residue. Residues 362 to 363 (DG), R367, 436 to 437 (NE), K447, R464, D466, and 477 to 482 (TAYSLS) each bind NAD(+).

It in the N-terminal section; belongs to the inositol monophosphatase superfamily. The protein in the C-terminal section; belongs to the NAD kinase family. As to quaternary structure, homotetramer. The cofactor is Mg(2+).

The protein resides in the cytoplasm. It carries out the reaction NAD(+) + ATP = ADP + NADP(+) + H(+). The catalysed reaction is NADP(+) + H2O = phosphate + NAD(+). The enzyme catalyses UTP + NAD(+) = UDP + NADP(+) + H(+). It catalyses the reaction 5-methyl-UTP + NAD(+) = 5-methyl-UDP + NADP(+) + H(+). It carries out the reaction CTP + NAD(+) = CDP + NADP(+) + H(+). The catalysed reaction is GTP + NAD(+) = GDP + NADP(+) + H(+). The enzyme catalyses dATP + NAD(+) = dADP + NADP(+) + H(+). It catalyses the reaction NADPH + H2O = phosphate + NADH. It carries out the reaction adenosine 2'-phosphate + H2O = adenosine + phosphate. The catalysed reaction is beta-D-fructose 1,6-bisphosphate + H2O = beta-D-fructose 6-phosphate + phosphate. With respect to regulation, phosphatase activity is slightly inhibited by ADP, NADH and ATP, and moderately inhibited by NAD and 5'-AMP. Kinase activity is slightly inhibited by ADP and NADP. Involved in the regulation of the intracellular balance between NAD(H) and NADP(H), and is a key enzyme in the biosynthesis of NADP. Catalyzes the phosphorylation and dephosphorylation of NAD and NADP, respectively. Although it shows conflicting dual activities and is able to supply NADP, it seems that its physiological role is to prevent excess accumulation of NADP. Kinase can use ATP and other nucleoside triphosphates (UTP, TTP, CTP, GTP) as well as inorganic polyphosphate (poly(P)) as phosphoryl donors, however poly(P) is not considered to be the physiological phosphoryl donor. NAD is the preferred substrate for the kinase, but NADH can also be used as phosphoryl acceptor. Phosphatase can use NADP or NADPH as phosphoryl donor, but NADP is the preferred substrate. Phosphatase also has an activity toward the terminal phosphate group at C-2 of adenosine in 2'-AMP and toward the phosphate group at C-1 of fructose 1,6-bisphosphate, but not toward inositol 1-phosphate. This is Bifunctional NADP phosphatase/NAD kinase from Methanocaldococcus jannaschii (strain ATCC 43067 / DSM 2661 / JAL-1 / JCM 10045 / NBRC 100440) (Methanococcus jannaschii).